We begin with the raw amino-acid sequence, 455 residues long: Gastric inhibitory polypeptide receptor (455 aa).

The first 18 residues, 1-18 (MPLRLLLLLLWLWGLSLQ), serve as a signal peptide directing secretion. Over 19–135 (RAETDSEGQT…DQKLILERLQ (117 aa)) the chain is Extracellular. 3 disulfides stabilise this stretch: cysteine 43-cysteine 67, cysteine 58-cysteine 100, and cysteine 81-cysteine 115. 3 N-linked (GlcNAc...) asparagine glycosylation sites follow: asparagine 59, asparagine 69, and asparagine 74. A helical transmembrane segment spans residues 136-158 (VVYTVGYSLSLATLLLALLILSL). The Cytoplasmic segment spans residues 159-166 (FRRLHCTR). The helical transmembrane segment at 167–186 (NYIHMNLFTSFMLRAGAILT) threads the bilayer. At 187 to 214 (RDQLLPPLGPYTGNQTPTLWNQALAACR) the chain is on the extracellular side. The helical transmembrane segment at 215–239 (TAQILTQYCVGANYTWLLVEGVYLH) threads the bilayer. At 240–251 (HLLVVVRRSEKG) the chain is on the cytoplasmic side. Residues 252–275 (HFRCYLLLGWGAPALFVIPWVIVR) traverse the membrane as a helical segment. Topologically, residues 276-290 (YLYENTQCWERNEVK) are extracellular. The chain crosses the membrane as a helical span at residues 291–316 (AIWWIIRTPILITILINFLIFIRILG). The Cytoplasmic portion of the chain corresponds to 317–338 (ILVSKLRTRQMRCPDYRLRLAR). A helical membrane pass occupies residues 339–359 (STLTLMPLLGVHEVVFAPVTE). Residues 360–374 (EQAEGSLRFAKLAFE) lie on the Extracellular side of the membrane. Residues 375–395 (IFLSSFQGFLVSVLYCFINKE) traverse the membrane as a helical segment. Residues 396 to 455 (VQSEIRRLRLSLQEQCPRPHLGQAPRAVPLSSAPQEAAIRNALPSGMLHVPGDEVLESYC) lie on the Cytoplasmic side of the membrane.

It belongs to the G-protein coupled receptor 2 family. As to quaternary structure, may form homodimers and heterodimers with GLP1R. N-glycosylation is required for cell surface expression and lengthens receptor half-life by preventing degradation in the ER. As to expression, present in the pancreas as well as the gut, adipose tissue, heart, pituitary, and inner layers of the adrenal cortex, whereas it is not found in kidney, spleen, or liver. It is also expressed in several brain regions, including the cerebral cortex, hippocampus, and olfactory bulb.

The protein localises to the cell membrane. Its function is as follows. This is a receptor for GIP. The activity of this receptor is mediated by G proteins which activate adenylyl cyclase. This chain is Gastric inhibitory polypeptide receptor (Gipr), found in Rattus norvegicus (Rat).